Consider the following 283-residue polypeptide: MKQPFSRLFGFGDKQDQEMETGKQEEVHQLPIKEIVPNRFQPRTIFDDERIEELAQTIRTHGIIQPIVVRQREGKYEIIAGERRFRAVTLLGWETIPAIIKEFNDSQTASVALIENLQREGLTAVEEAVAYQKLIELHGLTQESLAQRLGKGQSTIANKLRLLHLSEPVQQAIMERKISERHARALLSLKDDALETKLLEEIVEQHLNVKQTEERVKELLEDAPASKPKKKPTRKAYSKDMRIAMNTIRQSVDMVMKSGLKVDTAEEEHEDFYQFTIRIPKKK.

The tract at residues 1–26 is disordered; it reads MKQPFSRLFGFGDKQDQEMETGKQEE. The span at 13–26 shows a compositional bias: basic and acidic residues; that stretch reads DKQDQEMETGKQEE. The H-T-H motif DNA-binding region spans 143 to 162; it reads ESLAQRLGKGQSTIANKLRL.

The protein belongs to the ParB family.

The protein resides in the cytoplasm. The protein localises to the nucleoid. Functionally, effects nucleoid occlusion by binding relatively nonspecifically to DNA and preventing the assembly of the division machinery in the vicinity of the nucleoid, especially under conditions that disturb the cell cycle. It helps to coordinate cell division and chromosome segregation by preventing the formation of the Z ring through the nucleoid, which would cause chromosome breakage. This Halalkalibacterium halodurans (strain ATCC BAA-125 / DSM 18197 / FERM 7344 / JCM 9153 / C-125) (Bacillus halodurans) protein is Nucleoid occlusion protein.